Reading from the N-terminus, the 449-residue chain is Hyaluronidase-3 (449 aa).

Positions 1 to 23 (MYHIWIKFLAAWIFLKKFNGVHV) are cleaved as a signal peptide. 2 disulfides stabilise this stretch: cysteine 47/cysteine 340 and cysteine 211/cysteine 227. N-linked (GlcNAc...) asparagine glycosylation is found at asparagine 67, asparagine 103, and asparagine 111. Glutamate 135 serves as the catalytic Proton donor. Residue asparagine 153 is glycosylated (N-linked (GlcNAc...) asparagine). N-linked (GlcNAc...) asparagine glycosylation is present at asparagine 357. 3 disulfide bridges follow: cysteine 365–cysteine 376, cysteine 370–cysteine 427, and cysteine 429–cysteine 438. An N-linked (GlcNAc...) asparagine glycan is attached at asparagine 401. One can recognise an EGF-like domain in the interval 427-438 (CQCYQGWKGLYC).

The protein belongs to the glycosyl hydrolase 56 family. Monomer. Expressed by the venom gland.

The protein localises to the secreted. It catalyses the reaction Random hydrolysis of (1-&gt;4)-linkages between N-acetyl-beta-D-glucosamine and D-glucuronate residues in hyaluronate.. Snake venom endo-hyaluronidase that degrades hyaluronan to smaller oligosaccharide fragments. In venom, it is not toxic by itself, but increases the diffusion of other venom proteins by degrading the extracellular matrix. In addition, it displays antiedematogenic activity. This Cerastes cerastes (Horned desert viper) protein is Hyaluronidase-3.